Reading from the N-terminus, the 1130-residue chain is 3-hydroxy-3-methylglutaryl-coenzyme A reductase 1 (1130 aa).

At 1 to 46 (MATSLITRKLRSAEATNDVEPGWLKRQVTGVLQSISSHACQHPIHT) the chain is on the cytoplasmic side. The helical transmembrane segment at 47–67 (IVVIALLASTTYVGLLEGSLF) threads the bilayer. Residues 68–242 (DSVRNSRNIA…DLIKHAETID (175 aa)) lie on the Lumenal side of the membrane. N-linked (GlcNAc...) asparagine glycosylation occurs at asparagine 148. An SSD domain is found at 242-415 (DIVIMTLGYL…FTFYTTILCI (174 aa)). The chain crosses the membrane as a helical span at residues 243–263 (IVIMTLGYLSMHLSFVSLFFS). The Cytoplasmic segment spans residues 264 to 270 (MRRLGSN). A helical membrane pass occupies residues 271 to 291 (FWLAATVLFSGVFAFLFGLLV). Over 292–296 (TTKLG) the chain is Lumenal. Residues 297–317 (VPINVLLLSEGLPFLVVTIGF) traverse the membrane as a helical segment. The Cytoplasmic segment spans residues 318–366 (EKPIILTRAVLTAAADNRGRAGQASSSTTKSIQDSIQTAIKEQGFEIIR). A helical transmembrane segment spans residues 367–387 (DYCIEIAILIAGAASGVQGGL). Topologically, residues 388–389 (RQ) are lumenal. The helical transmembrane segment at 390 to 410 (FCFLAAWILFFDCVLLFTFYT) threads the bilayer. The Cytoplasmic portion of the chain corresponds to 411 to 476 (TILCIKLEIN…RKLRSSSVRR (66 aa)). A helical membrane pass occupies residues 477-497 (FKILMVGGFVLVNVVNLSTIP). Residues 498-601 (FRDSSQGAGL…ESLLKSIEDP (104 aa)) are Lumenal-facing. Residues 602–622 (IISKWIIAALTLSIILNGYLF) form a helical membrane-spanning segment. Over 623-1130 (NAARWSIKEP…ARGLTMSSSE (508 aa)) the chain is Cytoplasmic. Glutamate 792 serves as the catalytic Charge relay system. 798 to 804 (STSRGAK) contributes to the CoA binding site. Residues 859–861 (SRF) and 886–894 (DAMGMNMIS) contribute to the NADP(+) site. Catalysis depends on lysine 926, which acts as the Charge relay system. Residue 955–957 (VLK) coordinates CoA. The active-site Charge relay system is aspartate 1002. Position 1097–1098 (1097–1098 (AH)) interacts with CoA. The active-site Proton donor is histidine 1098. 1102–1103 (NR) is an NADP(+) binding site. A compositionally biased stretch (low complexity) spans 1103–1122 (RSAATTRTSTPVSAAVSAAR). The interval 1103–1130 (RSAATTRTSTPVSAAVSAARGLTMSSSE) is disordered.

This sequence belongs to the HMG-CoA reductase family.

It is found in the endoplasmic reticulum membrane. The enzyme catalyses (R)-mevalonate + 2 NADP(+) + CoA = (3S)-3-hydroxy-3-methylglutaryl-CoA + 2 NADPH + 2 H(+). It participates in metabolic intermediate biosynthesis; (R)-mevalonate biosynthesis; (R)-mevalonate from acetyl-CoA: step 3/3. In terms of biological role, HMG-CoA reductase; part of the first module of ergosterol biosynthesis pathway that includes the early steps of the pathway, conserved across all eukaryotes, and which results in the formation of mevalonate from acetyl-coenzyme A (acetyl-CoA). Hmg1 and hmg2 catalyze the reduction of hydroxymethylglutaryl-CoA (HMG-CoA) to mevalonate. The first module starts with the action of the cytosolic acetyl-CoA acetyltransferase erg10B that catalyzes the formation of acetoacetyl-CoA. The hydroxymethylglutaryl-CoA synthases erg13A and erg13B then condense acetyl-CoA with acetoacetyl-CoA to form HMG-CoA. The rate-limiting step of the early module is the reduction to mevalonate by the 3-hydroxy-3-methylglutaryl-coenzyme A (HMG-CoA) reductases hmg1 and hmg2. Mevalonate is also a precursor for the extracellular siderophore triacetylfusarinine C (TAFC). The sequence is that of 3-hydroxy-3-methylglutaryl-coenzyme A reductase 1 from Aspergillus fumigatus (strain ATCC MYA-4609 / CBS 101355 / FGSC A1100 / Af293) (Neosartorya fumigata).